Consider the following 113-residue polypeptide: Hydrogenase maturation factor HypA (113 aa).

Residue H2 coordinates Ni(2+). Zn(2+) contacts are provided by C73, C76, C89, and C92.

Belongs to the HypA/HybF family.

Its function is as follows. Involved in the maturation of [NiFe] hydrogenases. Required for nickel insertion into the metal center of the hydrogenase. This chain is Hydrogenase maturation factor HypA, found in Rhodopseudomonas palustris (strain BisB5).